Consider the following 467-residue polypeptide: ATP synthase subunit beta (467 aa).

Residue 150-157 (GGAGVGKT) participates in ATP binding.

The protein belongs to the ATPase alpha/beta chains family. F-type ATPases have 2 components, CF(1) - the catalytic core - and CF(0) - the membrane proton channel. CF(1) has five subunits: alpha(3), beta(3), gamma(1), delta(1), epsilon(1). CF(0) has three main subunits: a(1), b(2) and c(9-12). The alpha and beta chains form an alternating ring which encloses part of the gamma chain. CF(1) is attached to CF(0) by a central stalk formed by the gamma and epsilon chains, while a peripheral stalk is formed by the delta and b chains.

The protein localises to the cell inner membrane. The enzyme catalyses ATP + H2O + 4 H(+)(in) = ADP + phosphate + 5 H(+)(out). In terms of biological role, produces ATP from ADP in the presence of a proton gradient across the membrane. The catalytic sites are hosted primarily by the beta subunits. The sequence is that of ATP synthase subunit beta from Vibrio vulnificus (strain YJ016).